The primary structure comprises 425 residues: Histone-binding protein RBBP4-B (425 aa).

An N-acetylalanine modification is found at A2. WD repeat units lie at residues 32-125, 126-175, 176-223, 225-270, 271-314, 315-371, and 372-404; these read YDLV…NHEG, EVNR…RLRG, HQKE…KTIF, GHTA…HSVD, AHTA…HSFE, SHKD…FIHG, and GHTA…VWQM.

It belongs to the WD repeat RBAP46/RBAP48/MSI1 family. As to quaternary structure, binds directly to histone H4, probably via helix 1 of the histone fold, a region that is not accessible when histone H4 is in chromatin. Probably forms a large corepressor complex that contains ncor1, sin3a, hdac1-A and/or hdac1-B, hdac2, rbbp4-A and/or rbbp4-B and possibly rbbp7.

The protein resides in the nucleus. It localises to the chromosome. Its subcellular location is the telomere. Functionally, core histone-binding subunit that may target chromatin assembly factors, chromatin remodeling factors and histone deacetylases to their histone substrates in a manner that is regulated by nucleosomal DNA. Component of several complexes which regulate chromatin metabolism. The protein is Histone-binding protein RBBP4-B (rbbp4-b) of Xenopus laevis (African clawed frog).